A 628-amino-acid polypeptide reads, in one-letter code: tRNA uridine 5-carboxymethylaminomethyl modification enzyme MnmG (628 aa).

FAD contacts are provided by residues 11–16 (GAGHAG), Val-123, and Ser-178. 271–285 (GPRYCPSIETKIVTF) lines the NAD(+) pocket. Gln-368 contributes to the FAD binding site.

It belongs to the MnmG family. In terms of assembly, homodimer. Heterotetramer of two MnmE and two MnmG subunits. It depends on FAD as a cofactor.

The protein resides in the cytoplasm. Functionally, NAD-binding protein involved in the addition of a carboxymethylaminomethyl (cmnm) group at the wobble position (U34) of certain tRNAs, forming tRNA-cmnm(5)s(2)U34. This chain is tRNA uridine 5-carboxymethylaminomethyl modification enzyme MnmG, found in Bacteroides thetaiotaomicron (strain ATCC 29148 / DSM 2079 / JCM 5827 / CCUG 10774 / NCTC 10582 / VPI-5482 / E50).